A 646-amino-acid polypeptide reads, in one-letter code: Macrolide export ATP-binding/permease protein MacB (646 aa).

Positions 7–245 constitute an ABC transporter domain; the sequence is IRLEDICKTF…EATLQPHEEI (239 aa). Residue 43-50 participates in ATP binding; it reads GASGSGKS. The next 4 membrane-spanning stretches (helical) occupy residues 274 to 294, 528 to 548, 572 to 592, and 609 to 629; these read VLTL…LAIG, VAAI…LVSV, FIIE…ILGL, and FGPV…FGFL.

Belongs to the ABC transporter superfamily. Macrolide exporter (TC 3.A.1.122) family. Homodimer.

It is found in the cell inner membrane. In terms of biological role, non-canonical ABC transporter that contains transmembrane domains (TMD), which form a pore in the inner membrane, and an ATP-binding domain (NBD), which is responsible for energy generation. Confers resistance against macrolides. This Brucella abortus (strain 2308) protein is Macrolide export ATP-binding/permease protein MacB.